A 419-amino-acid chain; its full sequence is Effector protein BipC (419 aa).

Disordered stretches follow at residues 62-91 (VAGS…TVSG) and 338-402 (LQSG…AKSQ). 2 stretches are compositionally biased toward basic and acidic residues: residues 71 to 91 (ELAR…TVSG) and 380 to 392 (TRDE…REAA).

This sequence belongs to the SctB/SipC family.

The protein resides in the secreted. This Burkholderia mallei (strain NCTC 10247) protein is Effector protein BipC (bipC).